A 95-amino-acid chain; its full sequence is MSVDAQTVRRIAHLARIAVSDAEVPPLQDELNAILAFVEQLGAVDVSGVEPMTSVTPMAMKQREDAVTDGGYARDIVFNAPLTEDNYFLVPKVVE.

It belongs to the GatC family. As to quaternary structure, heterotrimer of A, B and C subunits.

The enzyme catalyses L-glutamyl-tRNA(Gln) + L-glutamine + ATP + H2O = L-glutaminyl-tRNA(Gln) + L-glutamate + ADP + phosphate + H(+). It catalyses the reaction L-aspartyl-tRNA(Asn) + L-glutamine + ATP + H2O = L-asparaginyl-tRNA(Asn) + L-glutamate + ADP + phosphate + 2 H(+). Functionally, allows the formation of correctly charged Asn-tRNA(Asn) or Gln-tRNA(Gln) through the transamidation of misacylated Asp-tRNA(Asn) or Glu-tRNA(Gln) in organisms which lack either or both of asparaginyl-tRNA or glutaminyl-tRNA synthetases. The reaction takes place in the presence of glutamine and ATP through an activated phospho-Asp-tRNA(Asn) or phospho-Glu-tRNA(Gln). The protein is Aspartyl/glutamyl-tRNA(Asn/Gln) amidotransferase subunit C of Methylobacterium nodulans (strain LMG 21967 / CNCM I-2342 / ORS 2060).